Reading from the N-terminus, the 500-residue chain is Abscisic acid 8'-hydroxylase 3 (500 aa).

A helical transmembrane segment spans residues 3–23 (ASFVIVIVISFFISLAFMCYV). Cys426 is a heme binding site.

It belongs to the cytochrome P450 family. Heme is required as a cofactor.

It is found in the membrane. The catalysed reaction is 2-cis-(+)-abscisate + reduced [NADPH--hemoprotein reductase] + O2 = (+)-8'-hydroxyabscisate + oxidized [NADPH--hemoprotein reductase] + H2O + H(+). It participates in plant hormone degradation; abscisic acid degradation. Functionally, involved in the oxidative degradation of abscisic acid. This is Abscisic acid 8'-hydroxylase 3 (CYP707A7) from Oryza sativa subsp. indica (Rice).